The sequence spans 184 residues: Large ribosomal subunit protein uL5c (184 aa).

Belongs to the universal ribosomal protein uL5 family. In terms of assembly, part of the 50S ribosomal subunit; contacts the 5S rRNA.

Its subcellular location is the plastid. It localises to the chloroplast. Its function is as follows. Binds 5S rRNA, forms part of the central protuberance of the 50S subunit. This Ostreococcus tauri protein is Large ribosomal subunit protein uL5c (rpl5).